An 812-amino-acid polypeptide reads, in one-letter code: Probable phosphoketolase (812 aa).

This sequence belongs to the XFP family. Thiamine diphosphate serves as cofactor.

This chain is Probable phosphoketolase, found in Thermosynechococcus vestitus (strain NIES-2133 / IAM M-273 / BP-1).